The chain runs to 122 residues: uncharacterized protein (122 aa).

4 helical membrane-spanning segments follow: residues 7-27 (IVAI…IFCD), 29-49 (LVLA…LGWI), 62-82 (AITG…SKNP), and 89-109 (KEIF…YFGY).

It localises to the cell membrane. This is an uncharacterized protein from Methanocaldococcus jannaschii (strain ATCC 43067 / DSM 2661 / JAL-1 / JCM 10045 / NBRC 100440) (Methanococcus jannaschii).